A 322-amino-acid polypeptide reads, in one-letter code: Malate dehydrogenase (322 aa).

Residues 10–15 (GSGQIG) and Asp34 each bind NAD(+). Substrate contacts are provided by Arg83 and Arg89. Residues Asn96 and 119-121 (ITN) contribute to the NAD(+) site. Substrate is bound by residues Asn121 and Arg152. His176 functions as the Proton acceptor in the catalytic mechanism.

This sequence belongs to the LDH/MDH superfamily. MDH type 3 family.

It catalyses the reaction (S)-malate + NAD(+) = oxaloacetate + NADH + H(+). Its function is as follows. Catalyzes the reversible oxidation of malate to oxaloacetate. In Nitrobacter hamburgensis (strain DSM 10229 / NCIMB 13809 / X14), this protein is Malate dehydrogenase.